A 357-amino-acid chain; its full sequence is sn-glycerol-3-phosphate import ATP-binding protein UgpC (357 aa).

The ABC transporter domain occupies 4 to 235 (LKLQAVTKSY…PASLFVASFI (232 aa)). Residue 37–44 (GPSGCGKS) coordinates ATP.

It belongs to the ABC transporter superfamily. sn-glycerol-3-phosphate importer (TC 3.A.1.1.3) family. The complex is composed of two ATP-binding proteins (UgpC), two transmembrane proteins (UgpA and UgpE) and a solute-binding protein (UgpB).

Its subcellular location is the cell inner membrane. It catalyses the reaction sn-glycerol 3-phosphate(out) + ATP + H2O = sn-glycerol 3-phosphate(in) + ADP + phosphate + H(+). Functionally, part of the ABC transporter complex UgpBAEC involved in sn-glycerol-3-phosphate (G3P) import. Responsible for energy coupling to the transport system. This Pectobacterium atrosepticum (strain SCRI 1043 / ATCC BAA-672) (Erwinia carotovora subsp. atroseptica) protein is sn-glycerol-3-phosphate import ATP-binding protein UgpC.